Here is a 427-residue protein sequence, read N- to C-terminus: 3-phosphoshikimate 1-carboxyvinyltransferase (427 aa).

The 3-phosphoshikimate site is built by Lys22, Ser23, and Arg27. Lys22 serves as a coordination point for phosphoenolpyruvate. Phosphoenolpyruvate contacts are provided by Gly96 and Arg124. Ser169, Ser170, Gln171, Ser197, Asp313, Asn336, and Lys340 together coordinate 3-phosphoshikimate. Gln171 serves as a coordination point for phosphoenolpyruvate. The active-site Proton acceptor is the Asp313. The phosphoenolpyruvate site is built by Arg344, Arg386, and Lys411.

Belongs to the EPSP synthase family. As to quaternary structure, monomer.

The protein localises to the cytoplasm. It catalyses the reaction 3-phosphoshikimate + phosphoenolpyruvate = 5-O-(1-carboxyvinyl)-3-phosphoshikimate + phosphate. The protein operates within metabolic intermediate biosynthesis; chorismate biosynthesis; chorismate from D-erythrose 4-phosphate and phosphoenolpyruvate: step 6/7. Catalyzes the transfer of the enolpyruvyl moiety of phosphoenolpyruvate (PEP) to the 5-hydroxyl of shikimate-3-phosphate (S3P) to produce enolpyruvyl shikimate-3-phosphate and inorganic phosphate. This chain is 3-phosphoshikimate 1-carboxyvinyltransferase, found in Salmonella typhimurium (strain LT2 / SGSC1412 / ATCC 700720).